Here is a 101-residue protein sequence, read N- to C-terminus: Integration host factor subunit beta (101 aa).

The protein belongs to the bacterial histone-like protein family. As to quaternary structure, heterodimer of an alpha and a beta chain.

This protein is one of the two subunits of integration host factor, a specific DNA-binding protein that functions in genetic recombination as well as in transcriptional and translational control. The protein is Integration host factor subunit beta of Nitrobacter hamburgensis (strain DSM 10229 / NCIMB 13809 / X14).